We begin with the raw amino-acid sequence, 575 residues long: Cytoskeleton-associated protein 4 (575 aa).

The disordered stretch occupies residues 1–73 (MPSAKQRGSK…RGRSSAATAN (73 aa)). The Cytoplasmic portion of the chain corresponds to 1-85 (MPSAKQRGSK…SASCSRRLGR (85 aa)). Ser3, Ser17, and Ser19 each carry phosphoserine. Lys21 carries the N6-acetyllysine modification. Positions 37–53 (PAAPQQPQPPAPHPPQH) are enriched in pro residues. Residue Cys79 is the site of S-palmitoyl cysteine; by ZDHHC2 attachment. The helical transmembrane segment at 86–108 (VLNFLFYLSLVAAAAFSGWYVHH) threads the bilayer. The Extracellular segment spans residues 109 to 575 (VLEEVQQVRR…LKVEKIHEKI (467 aa)). Residues 125–193 (RQRDELGQGL…QKLQNEILKD (69 aa)) are a coiled coil. Ser211, Ser292, and Ser367 each carry phosphoserine. Coiled coils occupy residues 236–438 (DVQK…VGNL) and 507–575 (SSLD…HEKI).

Interacts with REEP5. Post-translationally, reversibly palmitoylated. Palmitoylation at Cys-79 by DHHC2 is required for its trafficking from the ER to the plasma membrane and for its perinuclear localization. Increased phosphorylation during mitosis prevents binding to microtubules. In terms of tissue distribution, expressed in cardiomyocytes (at protein level).

The protein localises to the endoplasmic reticulum membrane. Its subcellular location is the cell membrane. The protein resides in the cytoplasm. It localises to the cytoskeleton. It is found in the perinuclear region. High-affinity epithelial cell surface receptor for APF. In terms of biological role, mediates the anchoring of the endoplasmic reticulum to microtubules. This Mus musculus (Mouse) protein is Cytoskeleton-associated protein 4 (Ckap4).